Here is a 143-residue protein sequence, read N- to C-terminus: Small ribosomal subunit protein bS6 (143 aa).

The segment at 100 to 143 is disordered; it reads SPIIKMKDERREVVELTTSGSEDNQKDHHKEDLDKKTDEFSEEN. 2 stretches are compositionally biased toward basic and acidic residues: residues 104 to 113 and 122 to 143; these read KMKDERREVV and DNQKDHHKEDLDKKTDEFSEEN.

Belongs to the bacterial ribosomal protein bS6 family.

Binds together with bS18 to 16S ribosomal RNA. This chain is Small ribosomal subunit protein bS6, found in Hamiltonella defensa subsp. Acyrthosiphon pisum (strain 5AT).